Here is a 243-residue protein sequence, read N- to C-terminus: 7-cyano-7-deazaguanine synthase (243 aa).

14–24 serves as a coordination point for ATP; sequence FSGGQDSATCL. 4 residues coordinate Zn(2+): C202, C217, C220, and C223.

Belongs to the QueC family. Requires Zn(2+) as cofactor.

It catalyses the reaction 7-carboxy-7-deazaguanine + NH4(+) + ATP = 7-cyano-7-deazaguanine + ADP + phosphate + H2O + H(+). It participates in purine metabolism; 7-cyano-7-deazaguanine biosynthesis. Catalyzes the ATP-dependent conversion of 7-carboxy-7-deazaguanine (CDG) to 7-cyano-7-deazaguanine (preQ(0)). The protein is 7-cyano-7-deazaguanine synthase of Paraburkholderia phymatum (strain DSM 17167 / CIP 108236 / LMG 21445 / STM815) (Burkholderia phymatum).